The primary structure comprises 458 residues: tRNA modification GTPase MnmE (458 aa).

(6S)-5-formyl-5,6,7,8-tetrahydrofolate contacts are provided by Arg-28, Glu-85, and Lys-124. The TrmE-type G domain occupies Gly-220 to Gly-381. A K(+)-binding site is contributed by Asn-230. GTP is bound by residues Asn-230 to Ser-235, Thr-249 to Thr-255, and Asp-274 to Gly-277. Ser-234 contributes to the Mg(2+) binding site. K(+)-binding residues include Thr-249, Ile-251, and Thr-254. A Mg(2+)-binding site is contributed by Thr-255. Lys-458 contacts (6S)-5-formyl-5,6,7,8-tetrahydrofolate.

Belongs to the TRAFAC class TrmE-Era-EngA-EngB-Septin-like GTPase superfamily. TrmE GTPase family. As to quaternary structure, homodimer. Heterotetramer of two MnmE and two MnmG subunits. The cofactor is K(+).

Its subcellular location is the cytoplasm. In terms of biological role, exhibits a very high intrinsic GTPase hydrolysis rate. Involved in the addition of a carboxymethylaminomethyl (cmnm) group at the wobble position (U34) of certain tRNAs, forming tRNA-cmnm(5)s(2)U34. This chain is tRNA modification GTPase MnmE, found in Chromohalobacter salexigens (strain ATCC BAA-138 / DSM 3043 / CIP 106854 / NCIMB 13768 / 1H11).